The sequence spans 807 residues: Glycerol-3-phosphate acyltransferase (807 aa).

The short motif at 308–313 (CHRSHM) is the HXXXXD motif element.

Belongs to the GPAT/DAPAT family.

The protein resides in the cell inner membrane. It catalyses the reaction sn-glycerol 3-phosphate + an acyl-CoA = a 1-acyl-sn-glycero-3-phosphate + CoA. It participates in phospholipid metabolism; CDP-diacylglycerol biosynthesis; CDP-diacylglycerol from sn-glycerol 3-phosphate: step 1/3. The sequence is that of Glycerol-3-phosphate acyltransferase from Shewanella putrefaciens (strain CN-32 / ATCC BAA-453).